A 681-amino-acid chain; its full sequence is MRSWLGEGVRAQQWLSVCAGRQDMVLATVLLIAIVMMLLPLPTWMVDILITINLMFSVILLLIAIYLSDPLDLSVFPSLLLITTLYRLSLTISTSRLVLLQHNAGNIVDAFGKFVVGGNLTVGLVVFTIITIVQFIVITKGIERVAEVSARFSLDGMPGKQMSIDGDLRAGVIDADHARTLRQHVQQESRFLGAMDGAMKFVKGDTIAGIIVVLVNIIGGIIIAIVQYDMSMSEAVHTYSVLSIGDGLCGQIPSLLISLSAGIIVTRVPGEKRQNLATELSSQIARQPQSLILTAVVLMLLALIPGFPFITLAFFSALLALPIILIRRKKSVVSANGVEAPEKDSMVPGACPLILRLSPTLHSADLIRDIDAMRWFLFEDTGVPLPEVNIEVLPEPTEKLTVLLYQEPVFSLSIPAQADYLLIGADASVVGDSQTLPNGMGQICWLTKDMAHKAQGFGLDVFAGSQRISALLKCVLLRHMGEFIGVQETRYLMNAMEKNYSELVKELQRQLPINKIAETLQRLVSERVSIRDLRLIFGTLIDWAPREKDVLMLTEYVRIALRRHILRRLNPEGKPLPILRIGEGIENLVRESIRQTAMGTYTALSSRHKTQILQLIEQALKQSAKLFIVTSVDTRRFLRKITEATLFDVPILSWQELGEESLIQVVESIDLSEEELADNEE.

The next 7 helical transmembrane spans lie at Met24–Trp44, Ile48–Ser68, Leu73–Ser93, Gly118–Ile138, Thr206–Val226, Ile244–Ile264, and Ala295–Phe315.

Belongs to the FHIPEP (flagella/HR/invasion proteins export pore) family.

It is found in the cell inner membrane. Component of Salmonella pathogenicity island 2 (SPI-2) type III secretion system, required for secretion of some type III-secreted effectors including the SpvB exotoxin. The polypeptide is Secretion system apparatus protein SsaV (ssaV) (Salmonella typhimurium (strain 14028s / SGSC 2262)).